The sequence spans 309 residues: Pyridoxal kinase (309 aa).

Thr2 is modified (N-acetylthreonine; in Pyridoxal kinase, N-terminally processed). Positions 23 and 58 each coordinate pyridoxal. Thr58 is a pyridoxal 5'-phosphate binding site. Position 124 (Asp124) interacts with ATP. Residue Asp124 coordinates Na(+). Asp129 contributes to the Mg(2+) binding site. Thr155 is a binding site for Na(+). ATP contacts are provided by residues 157–160 (NQFE), 193–194 (TS), 225–227 (IPA), and Thr232. Thr193 provides a ligand contact to Na(+). 233-234 (GD) contributes to the pyridoxal 5'-phosphate binding site. The Proton acceptor role is filled by Asp234.

This sequence belongs to the pyridoxine kinase family. In terms of assembly, homodimer. Zn(2+) is required as a cofactor. Expressed ubiquitously in leaves, stems, roots, flowers and siliques. Present in root hairs and other tip-growing cells such as papillar cells on the top of stigma.

The catalysed reaction is pyridoxal + ATP = pyridoxal 5'-phosphate + ADP + H(+). The protein operates within cofactor metabolism; pyridoxal 5'-phosphate salvage; pyridoxal 5'-phosphate from pyridoxal: step 1/1. Catalyzes the transfer of a phosphate group from ATP to the 5-hydroxylmethyl group of pyridoxal to form the biologically active pyridoxal phosphate, an active form of vitamin B6. Required for Na(+) and K(+) homeostasis and for salt tolerance. Involved in root hair development, both for initiation and tip growth. This chain is Pyridoxal kinase, found in Arabidopsis thaliana (Mouse-ear cress).